Consider the following 320-residue polypeptide: Glutathione synthetase (320 aa).

The 185-residue stretch at 133 to 317 folds into the ATP-grasp domain; that stretch reads KMYTLQFAAV…LGEKVICWLE (185 aa). 159 to 215 contacts ATP; the sequence is LEEHGAAVLKPLGGKAGEGILFLDPGDRNFNSLVEISTQHGKEPVMVQRFLPEAKEG. Mg(2+) contacts are provided by Glu-288 and Asn-290.

The protein belongs to the prokaryotic GSH synthase family. Mg(2+) is required as a cofactor. It depends on Mn(2+) as a cofactor.

It catalyses the reaction gamma-L-glutamyl-L-cysteine + glycine + ATP = glutathione + ADP + phosphate + H(+). The protein operates within sulfur metabolism; glutathione biosynthesis; glutathione from L-cysteine and L-glutamate: step 2/2. The protein is Glutathione synthetase of Synechocystis sp. (strain ATCC 27184 / PCC 6803 / Kazusa).